A 3176-amino-acid polypeptide reads, in one-letter code: Large tegument protein deneddylase (3176 aa).

The span at 1–12 (MSNGDWGQSQRP) shows a compositional bias: polar residues. The tract at residues 1 to 28 (MSNGDWGQSQRPRGTGPMRGIRTMDVNA) is disordered. A deubiquitination activity region spans residues 1–268 (MSNGDWGQSQ…YEANGSGFDL (268 aa)). A Peptidase C76 domain is found at 41 to 258 (LGTASCNQAH…MLEHYGVYDF (218 aa)). Catalysis depends on residues cysteine 61, aspartate 193, and histidine 195. The segment at 319-342 (PAARYSPAKTNSPPPSPASAAPAS) is disordered. Repeat copies occupy residues 335–339 (PASAA), 340–344 (PASAA), 345–349 (PASAA), 350–354 (PASAA), and 355–359 (PASAA). The tract at residues 335-384 (PASAAPASAAPASAAPASAAPASAAQASVAPASVAPASAAPASAAPDSAA) is 10 X 5 AA approximate repeats of P-A-S-A-A. One copy of the 6; approximate repeat lies at 360-364 (QASVA). Residues 365–369 (PASVA) form a 7; approximate repeat. Repeat copies occupy residues 370-374 (PASAA) and 375-379 (PASAA). Low complexity predominate over residues 376 to 386 (ASAAPDSAAPA). Disordered regions lie at residues 376–683 (ASAA…GSGL), 928–950 (LLSG…SIYR), 1170–1193 (APIS…TPPL), 1435–1461 (LMET…RARE), 2610–3008 (GLVS…PGAR), and 3023–3043 (TYTV…KMPK). A 10; approximate repeat occupies 380-384 (PDSAA). Over residues 457–488 (PRPPVPPHRPPSAARLPPPVIPIPHQSPPASP) the composition is skewed to pro residues. Low complexity predominate over residues 519–546 (AAPSNPEIPLTTPSPSPTAAAAPTATTL). Residues 579–636 (APSPLLPQQQPPPSAAPAPSPLLPQQQPPPSAARAPSPLPPQQQPLPSATPAPPPAQQ) are compositionally biased toward pro residues. Residues 581–611 (SPLLPQQQPPPSAAPAPSPLLPQQQPPPSAA) are interaction with inner tegument protein. The span at 1170 to 1182 (APISPASPSATPA) shows a compositional bias: low complexity. The span at 2619 to 2630 (SADNTPASSDRL) shows a compositional bias: polar residues. Residues 2643-2654 (EGSTTAESEASG) show a composition bias toward low complexity. Residues 2738-2747 (QPAPQQPPSS) show a composition bias toward pro residues. Composition is skewed to polar residues over residues 2761–2772 (SPHSTPSTASGS) and 2811–2831 (SAAS…SSQD). Positions 2839–2854 (MQREKKQQGGREEAAE) are enriched in basic and acidic residues. 2 stretches are compositionally biased toward low complexity: residues 2872–2886 (APVV…ATPA) and 2901–2912 (APALGSGLAAPA).

It belongs to the herpesviridae large tegument protein family. Interacts with host CUL1 and CUL4A; these interactions inhibit the E3 ligase activity of cullins. Interacts with inner tegument protein. Interacts with capsid vertex specific component CVC2. Interacts with the major capsid protein/MCP. Interacts with host TRIM25 and YWHAZ.

It is found in the virion tegument. The protein localises to the host cytoplasm. The protein resides in the host nucleus. It catalyses the reaction Thiol-dependent hydrolysis of ester, thioester, amide, peptide and isopeptide bonds formed by the C-terminal Gly of ubiquitin (a 76-residue protein attached to proteins as an intracellular targeting signal).. Large tegument protein that plays multiple roles in the viral cycle. During viral entry, remains associated with the capsid while most of the tegument is detached and participates in the capsid transport toward the host nucleus. Plays a role in the routing of the capsid at the nuclear pore complex and subsequent uncoating. Within the host nucleus, acts as a deneddylase and promotes the degradation of nuclear CRLs (cullin-RING ubiquitin ligases) and thereby stabilizes nuclear CRL substrates, while cytoplasmic CRLs remain unaffected. These modifications prevent host cell cycle S-phase progression and create a favorable environment allowing efficient viral genome replication. Participates later in the secondary envelopment of capsids. Indeed, plays a linker role for the association of the outer viral tegument to the capsids together with the inner tegument protein. Counteracts host TLR-mediated NF-kappa-B activation through both MYD88 and TICAM1-dependent pathways by interfering with 'Lys-63'- and 'Lys-48'-linked ubiquitination of signaling intermediates such as TRAF6 and IKBKG. Inhibits type I interferon production by forming a tri-molecular complex with host TRIM25 and 14-3-3 thereby promoting TRIM25 autoubiquitination and sequestration of the ligase into inactive protein aggregates. In turn, host RIGI is recruited to the complex but ubiquitination is severely impaired leading to inhibition of the pathway. Also catalyzes the removal of 'Lys-48'- and 'Lys-63'-linked ubiquitin chains on host TBK1 and STING1 suppressing cGAS-STING signaling in addition to the RIGI-MAVS pathway. Inhibits selective autophagy by deubiquitinating host SQSTM1. In turn, decreased SQSTM1 ubiquitination fails to recruit LC3 to SQSTM1-positive aggregates. In the host nucleus, deubiquitinates topoisomerase II subunits TOP2A and TOP2B thereby stabilizing SUMOylated TOP2 which halts the DNA damage response to TOP2-induced double strand DNA breaks and promotes cell survival. This is Large tegument protein deneddylase from Homo sapiens (Human).